The following is a 52-amino-acid chain: uncharacterized protein (52 aa).

This is an uncharacterized protein from Rickettsia conorii (strain ATCC VR-613 / Malish 7).